A 667-amino-acid polypeptide reads, in one-letter code: NADPH--cytochrome P450 reductase (667 aa).

Over 1–8 (MEILESID) the chain is Lumenal. A helical transmembrane segment spans residues 9 to 29 (FIEVLILDNLGAIIIVAVIVG). Over 30 to 667 (TYLYMNKPPP…HGRYLQDVWF (638 aa)) the chain is Cytoplasmic. Positions 72-215 (MKIFFGTQTR…DFNRWKKDMW (144 aa)) constitute a Flavodoxin-like domain. Residues 164 to 173 (LGNKTYEHYN) and D199 each bind FMN. Residues 277 to 511 (KNPYYAEVLE…FVRESHFKLP (235 aa)) enclose the FAD-binding FR-type domain. R297 contributes to the NADP(+) binding site. FAD-binding positions include 468–470 (TSV) and 484–487 (GVAS). NADP(+) contacts are provided by residues T527, 586–587 (SR), and 592–596 (KVYVQ). FAD is bound at residue W666.

It belongs to the NADPH--cytochrome P450 reductase family. This sequence in the N-terminal section; belongs to the flavodoxin family. The protein in the C-terminal section; belongs to the flavoprotein pyridine nucleotide cytochrome reductase family. Requires FAD as cofactor. FMN is required as a cofactor.

It is found in the endoplasmic reticulum membrane. The enzyme catalyses 2 oxidized [cytochrome P450] + NADPH = 2 reduced [cytochrome P450] + NADP(+) + H(+). This enzyme is required for electron transfer from NADP to cytochrome P450 in microsomes. It can also provide electron transfer to heme oxygenase and cytochrome B5. The protein is NADPH--cytochrome P450 reductase (redB) of Dictyostelium discoideum (Social amoeba).